The primary structure comprises 361 residues: Putative agmatine deiminase (361 aa).

Residue Cys354 is the Amidino-cysteine intermediate of the active site.

This sequence belongs to the agmatine deiminase family.

The enzyme catalyses agmatine + H2O = N-carbamoylputrescine + NH4(+). The polypeptide is Putative agmatine deiminase (Streptococcus pneumoniae (strain Taiwan19F-14)).